Reading from the N-terminus, the 234-residue chain is Proteasome subunit alpha type-2 (234 aa).

Alanine 2 carries the N-acetylalanine modification. Position 121 is a phosphotyrosine (tyrosine 121).

The protein belongs to the peptidase T1A family. In terms of assembly, the 26S proteasome consists of a 20S proteasome core and two 19S regulatory subunits. The 20S proteasome core is composed of 28 subunits that are arranged in four stacked rings, resulting in a barrel-shaped structure. The two end rings are each formed by seven alpha subunits, and the two central rings are each formed by seven beta subunits. The catalytic chamber with the active sites is on the inside of the barrel.

The protein localises to the cytoplasm. It is found in the nucleus. In terms of biological role, the proteasome is a multicatalytic proteinase complex which is characterized by its ability to cleave peptides with Arg, Phe, Tyr, Leu, and Glu adjacent to the leaving group at neutral or slightly basic pH. The proteasome has an ATP-dependent proteolytic activity. PSMA2 may have a potential regulatory effect on another component(s) of the proteasome complex through tyrosine phosphorylation. The polypeptide is Proteasome subunit alpha type-2 (psma2) (Carassius auratus (Goldfish)).